A 156-amino-acid chain; its full sequence is Small ribosomal subunit protein uS7 (156 aa).

This sequence belongs to the universal ribosomal protein uS7 family. As to quaternary structure, part of the 30S ribosomal subunit. Contacts proteins S9 and S11.

In terms of biological role, one of the primary rRNA binding proteins, it binds directly to 16S rRNA where it nucleates assembly of the head domain of the 30S subunit. Is located at the subunit interface close to the decoding center, probably blocks exit of the E-site tRNA. The sequence is that of Small ribosomal subunit protein uS7 from Lawsonia intracellularis (strain PHE/MN1-00).